An 870-amino-acid polypeptide reads, in one-letter code: Radial spoke head 10 homolog B (870 aa).

Residues 1–16 (MVKEKKKADKKGEKSA) show a composition bias toward basic and acidic residues. Residues 1–43 (MVKEKKKADKKGEKSARSPSSLSDNLDFSKQDGNTTRQEMSPA) form a disordered region. The span at 17-39 (RSPSSLSDNLDFSKQDGNTTRQE) shows a compositional bias: polar residues. MORN repeat units lie at residues 86 to 108 (YEGEKVRGLYEGEGFAAFQGGCT), 109 to 131 (YRGMFSEGLMHGQGTYIWADGLK), 132 to 154 (YEGDFVKNVPMNHGVYTWPDGSM), 155 to 177 (YEGEVVNGMRNGFGMFKCSTQPV), 179 to 201 (YIGHWCNGKRHGKGSIYYNQEGT), 204 to 226 (YEGDWVQNIKKGWGIRCYKSGNI), 227 to 249 (YEGQWEDNMRHGEGRMRWLTTNE), 251 to 273 (YTGRWERGIQNGFGTHTWFLKRI), 284 to 306 (YIGEFVNGYRHGRGKFYYASGAM), and 307 to 329 (YDGEWVSNKKHGMGRLTFKNGRV). The interval 674–704 (NKSPSAVMSHESDAAHSDSARSSSSKLELSP) is disordered. The segment covering 683–692 (HESDAAHSDS) has biased composition (basic and acidic residues). Residues 693-703 (ARSSSSKLELS) are compositionally biased toward low complexity. Positions 784–811 (KEKIRADRLRSTAQAQQRKMEDDELEAR) form a coiled coil. Positions 840 to 870 (VSSSHLILDPPKEDVTVSPSSKTITSKKKKK) are disordered.

As to quaternary structure, interacts with RSPH6A. Does not appear to be part of the axonemal radial spoke complexes 1 or 2.

It localises to the cytoplasm. The protein localises to the cytoskeleton. The protein resides in the cilium axoneme. Its subcellular location is the cell projection. It is found in the cilium. It localises to the flagellum. Functionally, may function as part of the axonemal radial spoke complex 3 (RS3). Radial spoke complexes are important for ciliary motility. This chain is Radial spoke head 10 homolog B (RSPH10B), found in Homo sapiens (Human).